Here is a 280-residue protein sequence, read N- to C-terminus: uncharacterized protein (280 aa).

The first 26 residues, Met1–Ala26, serve as a signal peptide directing secretion.

To E.coli YibQ.

This is an uncharacterized protein from Haemophilus influenzae (strain ATCC 51907 / DSM 11121 / KW20 / Rd).